Here is a 175-residue protein sequence, read N- to C-terminus: Regenerating islet-derived protein 3-gamma (175 aa).

Positions 1–26 are cleaved as a signal peptide; sequence MLPPMALPSVSWMLLSCLILLCQVQG. Positions 27-37 are excised as a propeptide; the sequence is EETQKELPSPR. 3 disulfides stabilise this stretch: C40-C51, C68-C171, and C146-C163. Residues 47-172 enclose the C-type lectin domain; it reads YGSPCYALFL…CDAKLPYVCK (126 aa). Residues 103–118 are sufficient to activate EXTL3; that stretch reads WIGLHDPTQGSEPDGD. A Zn(2+)-binding site is contributed by H107. The short motif at 114 to 116 is the EPN element; sequence EPD. E121 and H145 together coordinate Zn(2+).

As to quaternary structure, forms a hexameric membrane-permeabilizing oligomeric pore on membrane phospholipids. The hexamer is formed by three dimers related by helical symmetry. Forms filaments, filamentation traps pore complexes and limits damage to host cells. Interacts with EXTL3. Post-translationally, proteolytic processing by trypsin removes an inhibitory N-terminal propeptide and is essential for peptidoglycan binding and antibacterial activity. In terms of tissue distribution, predominantly expressed in pancreas, where it may be restricted to exocrine pancreas. Moderate expression levels in testis and weak in heart, kidney and placenta.

It is found in the secreted. The protein resides in the cytoplasm. Its activity is regulated as follows. Lipopolysaccharide inhibits pore-forming activity, explaining why is bactericidal for Gram-positive but not Gram-negative bacteria. Bactericidal C-type lectin which acts exclusively against Gram-positive bacteria and mediates bacterial killing by binding to surface-exposed carbohydrate moieties of peptidoglycan. Restricts bacterial colonization of the intestinal epithelial surface and consequently limits activation of adaptive immune responses by the microbiota. In terms of biological role, acts as a hormone in response to different stimuli like anti-inflammatory signals, such as IL17A, or gut microbiome. Is secreted by different cell types to activate its receptor EXTL3 and induce cell specific signaling pathways. Induced by IL17A in keratinocytes, regulates keratinocyte proliferation and differentiation after skin injury. In parallel, inhibits skin inflammation through the inhibition of inflammatory cytokines such as IL6 and TNF. Induced by IL22 in lung epithelial cells, inhibits cytokine production and regulates allergic airway inflammation. Induced in small intestine by inulin-enriched diet and Lactobacillus gasseri enriched microbiome, plays a role in the improvement of gut barrier function, the regulation of energy balance and glucose levels. Modulates microbiota composition in duodenal contents. Produced by nociceptor in response to endotoxins, prevents endotoxic death by targeting kynurenine pathway in microglia. Functionally, has bacteriostatic activity. Its function is as follows. Has bactericidal activity against L.monocytogenes and methicillin-resistant S.aureus. This is Regenerating islet-derived protein 3-gamma from Homo sapiens (Human).